Here is a 452-residue protein sequence, read N- to C-terminus: Caspase-2 (452 aa).

Ala-2 bears the N-acetylalanine mark. A propeptide spanning residues 2–169 (AAPSAGSWST…TVEHSLDNKD (168 aa)) is cleaved from the precursor. The CARD domain maps to 32 to 121 (MHPHHQETLK…GHLEDMLLTT (90 aa)). Ser-157 carries the post-translational modification Phosphoserine. Catalysis depends on residues His-277 and Cys-320. Positions 326–333 (DRGVDQQD) are excised as a propeptide. Positions 327 to 336 (RGVDQQDGKN) are enriched in basic and acidic residues. Residues 327-354 (RGVDQQDGKNHAGSPGCEESDAGKEKLP) are disordered. Ser-340 is subject to Phosphoserine.

It belongs to the peptidase C14A family. In terms of assembly, heterotetramer that consists of two anti-parallel arranged heterodimers, each one formed by a p18 subunit and a p12 subunit. Forms a complex named the PIDDosome with PIDD1 and CRADD. Interacts with NOL3 (via CARD domain); inhibits CASP2 activity in a phosphorylation-dependent manner. In terms of processing, the mature protease can process its own propeptide, but not that of other caspases. Expressed at higher levels in the embryonic lung, liver and kidney than in the heart and brain. In adults, higher level expression is seen in the placenta, lung, kidney, and pancreas than in the heart, brain, liver and skeletal muscle.

It carries out the reaction Strict requirement for an Asp residue at P1, with 316-Asp being essential for proteolytic activity and has a preferred cleavage sequence of Val-Asp-Val-Ala-Asp-|-.. Its function is as follows. Is a regulator of the cascade of caspases responsible for apoptosis execution. Might function by either activating some proteins required for cell death or inactivating proteins necessary for cell survival. Associates with PIDD1 and CRADD to form the PIDDosome, a complex that activates CASP2 and triggers apoptosis in response to genotoxic stress. Functionally, acts as a positive regulator of apoptosis. Acts as a negative regulator of apoptosis. In terms of biological role, may function as an endogenous apoptosis inhibitor that antagonizes caspase activation and cell death. This is Caspase-2 (CASP2) from Homo sapiens (Human).